Here is an 892-residue protein sequence, read N- to C-terminus: Formin-like protein 8 (892 aa).

Positions 1–23 (MPPAIARFVAIAAVLLCGHVAVA) are cleaved as a signal peptide. Residues 43-119 (FPIEWTPPPS…SGSGSGHHGG (77 aa)) are disordered. A compositionally biased stretch (pro residues) spans 47–59 (WTPPPSPPPPPAP). Residues 87–111 (TTPTSPGTTPSPTTVAADVSKTPSG) show a composition bias toward low complexity. Residues 126–146 (IVAAGAGAAAAVALLGFACAF) traverse the membrane as a helical segment. The disordered stretch occupies residues 188-457 (PTTPARHHGP…GSGEPRPKLK (270 aa)). Residues 210 to 230 (LRSERARRGVSRDEDADHPSP) show a composition bias toward basic and acidic residues. Composition is skewed to low complexity over residues 268–286 (AEAWSSASASSPPTTTTAS), 297–306 (FFPPVAAIAA), and 321–330 (RTRFSTGSTP). Residues 339–383 (SPRPVQPSNAPPPPPPPPPPPPPPPPPKLNTAPKPPPPPPPPPSV) show a composition bias toward pro residues. Residues 424–436 (AATTVDNNGSTSM) show a composition bias toward polar residues. One can recognise an FH2 domain in the interval 446-867 (DGGSGEPRPK…GSARSFRISA (422 aa)).

This sequence belongs to the formin-like family. Class-I subfamily.

It is found in the membrane. The sequence is that of Formin-like protein 8 (FH8) from Oryza sativa subsp. japonica (Rice).